Reading from the N-terminus, the 60-residue chain is Defensin MGD-1 (60 aa).

4 disulfides stabilise this stretch: Cys4–Cys25, Cys10–Cys33, Cys14–Cys35, and Cys21–Cys38. Trp28 bears the 3-hydroxytryptophan mark. Cys38 carries the post-translational modification Cysteine amide. Positions 39-60 (GGRREDVEDIFDIFDNEAADRF) are excised as a propeptide.

This sequence belongs to the invertebrate defensin family. Type 2 subfamily. The hydroxylation of the Trp-28 is not important for the antibacterial activity. As to expression, abundantly expressed in hemocytes.

Its subcellular location is the secreted. Functionally, active against both Gram-positive and Gram-negative bacteria but is not cytotoxic towards human erythrocytes or protozoa. The polypeptide is Defensin MGD-1 (FH3) (Mytilus galloprovincialis (Mediterranean mussel)).